The following is an 82-amino-acid chain: MIKLRLKKYGKKREVSYRIVAINSASRRDGRPLEELGFYNPRTDETRLNVPAIVTRLKQGAQPTETVRSILEKAKVFEQVNG.

The protein belongs to the bacterial ribosomal protein bS16 family.

The protein is Small ribosomal subunit protein bS16 of Crocosphaera subtropica (strain ATCC 51142 / BH68) (Cyanothece sp. (strain ATCC 51142)).